A 431-amino-acid chain; its full sequence is Histidine--tRNA ligase (431 aa).

This sequence belongs to the class-II aminoacyl-tRNA synthetase family. Homodimer.

It is found in the cytoplasm. It catalyses the reaction tRNA(His) + L-histidine + ATP = L-histidyl-tRNA(His) + AMP + diphosphate + H(+). The chain is Histidine--tRNA ligase from Neisseria meningitidis serogroup C (strain 053442).